Here is a 245-residue protein sequence, read N- to C-terminus: Zinc finger protein AZF1 (245 aa).

Residues 1-15 (MALETLNSPTATTTA) are compositionally biased toward polar residues. Disordered stretches follow at residues 1–57 (MALE…NKNL) and 112–141 (LGGH…SHSN). A C2H2-type 1 zinc finger spans residues 97–119 (YKCTVCGKSFSSYQALGGHKTSH). The span at 123-134 (TNTSITSGNQEL) shows a compositional bias: polar residues. The C2H2-type 2 zinc finger occupies 164–186 (HTCSICFKSFASGQALGGHKRCH). The disordered stretch occupies residues 193-231 (GNGNGSSSNSVELVAGSDVSDVDNERWSEESAIGGHRGF).

As to expression, highly expressed in roots and at lower levels in leaves and stems.

It is found in the nucleus. Its function is as follows. Transcriptional repressor involved in the inhibition of plant growth under abiotic stress conditions. Can repress the expression of various genes, including osmotic stress and abscisic acid-repressive genes and auxin-inducible genes, by binding to their promoter regions in a DNA sequence-specific manner. In Arabidopsis thaliana (Mouse-ear cress), this protein is Zinc finger protein AZF1 (AZF1).